A 636-amino-acid chain; its full sequence is p-hydroxybenzoate-m-hydroxylase A (636 aa).

FAD-binding positions include 10-39 (DIVI…HIDN), 241-243 (RLY), Tyr289, and Asp310. Residues 11 to 28 (IVIVGAGPVGIVLSLCMS) form a helical membrane-spanning segment.

Belongs to the PheA/TfdB FAD monooxygenase family. It depends on FAD as a cofactor.

It is found in the membrane. It carries out the reaction 4-hydroxybenzoate + NADH + O2 + H(+) = 3,4-dihydroxybenzoate + NAD(+) + H2O. It catalyses the reaction 4-hydroxybenzoate + NADPH + O2 + H(+) = 3,4-dihydroxybenzoate + NADP(+) + H2O. Functionally, FAD-dependent monooxygenase; part of the benzoic acid degradation pathway also known as the protocatechuic acid pathway. Benzoic acid debradation begins with the conversion of benzoic acid into 4-hydroxybenzoic acid through hydroxylation by the benzoate-4-monooxygenase bphA, and its partner NADPH-cytochrome P450 reductase cprA which act as a mediator in electron donation from NADPH. 4-Hydroxybenzoic acid is then converted into 3,4-dihydroxybenzoic acid (also called protocatechuic acid) by the p-hydroxybenzoate-m-hydroxylase phhA. Protocatechuic acid is converted into 3-carboxy-cis,cis-muconic acid by the intradiol ring-cleavage dioxygenase prcA, which is further metabolized through the 3-oxoadipate pathway to finally enter the tricarboxylic acid cycle (TCA). In Aspergillus niger (strain ATCC MYA-4892 / CBS 513.88 / FGSC A1513), this protein is p-hydroxybenzoate-m-hydroxylase A.